A 577-amino-acid polypeptide reads, in one-letter code: Arginine--tRNA ligase (577 aa).

The short motif at 122–132 (PNVAKEMHVGH) is the 'HIGH' region element.

It belongs to the class-I aminoacyl-tRNA synthetase family. Monomer.

It localises to the cytoplasm. It catalyses the reaction tRNA(Arg) + L-arginine + ATP = L-arginyl-tRNA(Arg) + AMP + diphosphate. This Escherichia coli O9:H4 (strain HS) protein is Arginine--tRNA ligase.